The chain runs to 127 residues: Small ribosomal subunit protein uS11 (127 aa).

It belongs to the universal ribosomal protein uS11 family. In terms of assembly, part of the 30S ribosomal subunit. Interacts with proteins S7 and S18. Binds to IF-3.

In terms of biological role, located on the platform of the 30S subunit, it bridges several disparate RNA helices of the 16S rRNA. Forms part of the Shine-Dalgarno cleft in the 70S ribosome. The sequence is that of Small ribosomal subunit protein uS11 from Ruthia magnifica subsp. Calyptogena magnifica.